Here is a 186-residue protein sequence, read N- to C-terminus: ADP-ribosylation factor-like protein 6 (186 aa).

Gly2 carries N-myristoyl glycine lipidation. Residues 24 to 31, 69 to 73, and 130 to 133 contribute to the GTP site; these read GLDNSGKT, DMSGQ, and NKMD.

Belongs to the small GTPase superfamily. Arf family. As to quaternary structure, interacts with SEC61B, ARL6IP1, ARL6IP2, ARL6IP3, ARL6IP4 ARL6IP5 and ARL6IP6. Interacts (GTP-bound form) with the BBSome a complex that contains BBS1, BBS2, BBS4, BBS5, BBS7, BBS8/TTC8, BBS9 and BBIP10. Interacts (GTP-free form) with IFT27.

The protein resides in the cell projection. The protein localises to the cilium membrane. It is found in the cytoplasm. Its subcellular location is the cytoskeleton. It localises to the cilium axoneme. The protein resides in the cilium basal body. In terms of biological role, involved in membrane protein trafficking at the base of the ciliary organelle. Mediates recruitment onto plasma membrane of the BBSome complex which would constitute a coat complex required for sorting of specific membrane proteins to the primary cilia. Together with the BBSome complex and LTZL1, controls SMO ciliary trafficking and contributes to the sonic hedgehog (SHH) pathway regulation. May regulate cilia assembly and disassembly and subsequent ciliary signaling events such as the Wnt signaling cascade. Isoform 2 may be required for proper retinal function and organization. The polypeptide is ADP-ribosylation factor-like protein 6 (ARL6) (Bos taurus (Bovine)).